Reading from the N-terminus, the 1976-residue chain is Myosin-10 (1976 aa).

Arg-18 is modified (omega-N-methylarginine). The region spanning 31–81 (TAKKLVWIPSERHGFEAASIKEERGDEVMVELAENGKKAMVNKDDIQKMNP) is the Myosin N-terminal SH3-like domain. The 699-residue stretch at 85-783 (SKVEDMAELT…VLAHLEEERD (699 aa)) folds into the Myosin motor domain. 178–185 (GESGAGKT) contacts ATP. The residue at position 214 (Leu-214) is a Phosphoserine. An N6-acetyllysine modification is found at Lys-442. The segment at 661-683 (LTKLMATLRNTNPNFVRCIIPNH) is actin-binding. An IQ domain is found at 786–815 (ITDIIIFFQAVCRGYLARKAFAKKQQQLSA). Residues 845–1976 (LQVTRQEEEL…VNETQPPQSE (1132 aa)) adopt a coiled-coil conformation. The tract at residues 1127 to 1147 (FESEKASRNKAEKQKRDLSEE) is disordered. A compositionally biased stretch (basic and acidic residues) spans 1129 to 1147 (SEKASRNKAEKQKRDLSEE). A Phosphoserine modification is found at Ser-1145. N6-acetyllysine is present on residues Lys-1241, Lys-1301, and Lys-1645. Disordered regions lie at residues 1697 to 1728 (ASSE…SALL) and 1872 to 1976 (MEKA…PQSE). The span at 1698–1708 (SSERARRHAEQ) shows a compositional bias: basic and acidic residues. At Arg-1930 the chain carries Omega-N-methylarginine. Ser-1935, Ser-1937, Ser-1938, and Ser-1939 each carry phosphoserine. Arg-1940 carries the omega-N-methylarginine modification. 2 positions are modified to phosphoserine: Ser-1952 and Ser-1956. Thr-1960 carries the post-translational modification Phosphothreonine. A compositionally biased stretch (polar residues) spans 1967 to 1976 (VNETQPPQSE). The residue at position 1975 (Ser-1975) is a Phosphoserine.

This sequence belongs to the TRAFAC class myosin-kinesin ATPase superfamily. Myosin family. As to quaternary structure, myosin is a hexameric protein that consists of 2 heavy chain subunits (MHC), 2 alkali light chain subunits (MLC) and 2 regulatory light chain subunits (MLC-2). Interacts with PLEKHG6. Interacts with ECPAS. Interacts with KIF26B. Interacts with LARP6. Interacts with MCC. Interacts with CFAP95. (Microbial infection) Interacts with herpes simplex virus 1/HHV-1 envelope glycoprotein B. Post-translationally, phosphorylated by ABL2. Isoform 1 is expressed in cerebellum and spinal chord. Isoform 2 is expressed in cerebrum and retina. Isoform 3 is expressed in the cerebrum and to a much lower extent in cerebellum.

The protein localises to the cell projection. The protein resides in the lamellipodium. It localises to the cell membrane. Its function is as follows. Cellular myosin that appears to play a role in cytokinesis, cell shape, and specialized functions such as secretion and capping. Involved with LARP6 in the stabilization of type I collagen mRNAs for CO1A1 and CO1A2. During cell spreading, plays an important role in cytoskeleton reorganization, focal contacts formation (in the central part but not the margins of spreading cells), and lamellipodial extension; this function is mechanically antagonized by MYH9. In terms of biological role, (Microbial infection) Acts as a receptor for herpes simplex virus 1/HHV-1 envelope glycoprotein B. The protein is Myosin-10 (MYH10) of Homo sapiens (Human).